Consider the following 329-residue polypeptide: Ketol-acid reductoisomerase (NADP(+)) (329 aa).

Residues 2–182 form the KARI N-terminal Rossmann domain; it reads TQLFYDTDAD…GGTRAGILET (181 aa). NADP(+) is bound by residues 25–28, S51, S53, and 83–86; these read YGSQ and DEFQ. Residue H108 is part of the active site. G134 serves as a coordination point for NADP(+). A KARI C-terminal knotted domain is found at 183–328; sequence NFKEETETDL…KGLRSMFSWL (146 aa). D191, E195, E227, and E231 together coordinate Mg(2+). A substrate-binding site is contributed by S252.

It belongs to the ketol-acid reductoisomerase family. Mg(2+) is required as a cofactor.

The enzyme catalyses (2R)-2,3-dihydroxy-3-methylbutanoate + NADP(+) = (2S)-2-acetolactate + NADPH + H(+). It carries out the reaction (2R,3R)-2,3-dihydroxy-3-methylpentanoate + NADP(+) = (S)-2-ethyl-2-hydroxy-3-oxobutanoate + NADPH + H(+). Its pathway is amino-acid biosynthesis; L-isoleucine biosynthesis; L-isoleucine from 2-oxobutanoate: step 2/4. It functions in the pathway amino-acid biosynthesis; L-valine biosynthesis; L-valine from pyruvate: step 2/4. Its function is as follows. Involved in the biosynthesis of branched-chain amino acids (BCAA). Catalyzes an alkyl-migration followed by a ketol-acid reduction of (S)-2-acetolactate (S2AL) to yield (R)-2,3-dihydroxy-isovalerate. In the isomerase reaction, S2AL is rearranged via a Mg-dependent methyl migration to produce 3-hydroxy-3-methyl-2-ketobutyrate (HMKB). In the reductase reaction, this 2-ketoacid undergoes a metal-dependent reduction by NADPH to yield (R)-2,3-dihydroxy-isovalerate. This chain is Ketol-acid reductoisomerase (NADP(+)), found in Prochlorococcus marinus (strain MIT 9215).